The chain runs to 152 residues: FMN reductase (NADH) RutF (152 aa).

The protein belongs to the non-flavoprotein flavin reductase family. RutF subfamily.

The catalysed reaction is FMNH2 + NAD(+) = FMN + NADH + 2 H(+). Catalyzes the reduction of FMN to FMNH2 which is used to reduce pyrimidine by RutA via the Rut pathway. The chain is FMN reductase (NADH) RutF from Shigella flexneri.